A 193-amino-acid polypeptide reads, in one-letter code: Large ribosomal subunit protein uL5 (193 aa).

This sequence belongs to the universal ribosomal protein uL5 family. As to quaternary structure, part of the 50S ribosomal subunit; part of the 5S rRNA/L5/L18/L25 subcomplex. Contacts the 5S rRNA and the P site tRNA. Forms a bridge to the 30S subunit in the 70S ribosome.

In terms of biological role, this is one of the proteins that bind and probably mediate the attachment of the 5S RNA into the large ribosomal subunit, where it forms part of the central protuberance. In the 70S ribosome it contacts protein S13 of the 30S subunit (bridge B1b), connecting the 2 subunits; this bridge is implicated in subunit movement. Contacts the P site tRNA; the 5S rRNA and some of its associated proteins might help stabilize positioning of ribosome-bound tRNAs. This chain is Large ribosomal subunit protein uL5, found in Pseudarthrobacter chlorophenolicus (strain ATCC 700700 / DSM 12829 / CIP 107037 / JCM 12360 / KCTC 9906 / NCIMB 13794 / A6) (Arthrobacter chlorophenolicus).